Reading from the N-terminus, the 620-residue chain is Chaperone protein HscA homolog (620 aa).

It belongs to the heat shock protein 70 family.

In terms of biological role, chaperone involved in the maturation of iron-sulfur cluster-containing proteins. Has a low intrinsic ATPase activity which is markedly stimulated by HscB. This is Chaperone protein HscA homolog from Pseudomonas fluorescens (strain ATCC BAA-477 / NRRL B-23932 / Pf-5).